The primary structure comprises 112 residues: Putative pterin-4-alpha-carbinolamine dehydratase (112 aa).

Positions 1-30 are disordered; the sequence is MSDELQSRTCTPCRGDVPPMTKAEAKRQLA.

The protein belongs to the pterin-4-alpha-carbinolamine dehydratase family.

It carries out the reaction (4aS,6R)-4a-hydroxy-L-erythro-5,6,7,8-tetrahydrobiopterin = (6R)-L-erythro-6,7-dihydrobiopterin + H2O. This chain is Putative pterin-4-alpha-carbinolamine dehydratase, found in Aromatoleum aromaticum (strain DSM 19018 / LMG 30748 / EbN1) (Azoarcus sp. (strain EbN1)).